Consider the following 126-residue polypeptide: Protein LiaI (126 aa).

The next 2 helical transmembrane spans lie at 11–31 (FLLIVFGISVFFGGGSFGFII) and 56–76 (IIVGGIGAIMLICSLPFVVGI).

The protein resides in the cell membrane. In Bacillus subtilis (strain 168), this protein is Protein LiaI (liaI).